The sequence spans 282 residues: NH(3)-dependent NAD(+) synthetase (282 aa).

ATP is bound at residue 51 to 58; the sequence is GISGGVDS. Aspartate 57 lines the Mg(2+) pocket. Arginine 148 is a binding site for deamido-NAD(+). Threonine 168 is an ATP binding site. Glutamate 173 contributes to the Mg(2+) binding site. Positions 181 and 188 each coordinate deamido-NAD(+). 2 residues coordinate ATP: lysine 197 and threonine 219. 268–269 is a binding site for deamido-NAD(+); the sequence is HK.

The protein belongs to the NAD synthetase family. Homodimer.

It carries out the reaction deamido-NAD(+) + NH4(+) + ATP = AMP + diphosphate + NAD(+) + H(+). The protein operates within cofactor biosynthesis; NAD(+) biosynthesis; NAD(+) from deamido-NAD(+) (ammonia route): step 1/1. Catalyzes the ATP-dependent amidation of deamido-NAD to form NAD. Uses ammonia as a nitrogen source. This is NH(3)-dependent NAD(+) synthetase from Burkholderia lata (strain ATCC 17760 / DSM 23089 / LMG 22485 / NCIMB 9086 / R18194 / 383).